The sequence spans 382 residues: Processive diacylglycerol beta-glucosyltransferase (382 aa).

The protein belongs to the glycosyltransferase 28 family. UgtP subfamily.

The protein resides in the cell membrane. It catalyses the reaction a 1,2-diacyl-3-O-(beta-D-glucopyranosyl)-sn-glycerol + UDP-alpha-D-glucose = a 1,2-diacyl-3-O-(beta-D-Glc-(1-&gt;6)-beta-D-Glc)-sn-glycerol + UDP + H(+). The enzyme catalyses a 1,2-diacyl-3-O-(beta-D-Glc-(1-&gt;6)-beta-D-Glc)-sn-glycerol + UDP-alpha-D-glucose = a 1,2-diacyl-3-O-(beta-D-Glc-(1-&gt;6)-beta-D-Glc-(1-&gt;6)-beta-D-Glc)-sn-glycerol + UDP + H(+). It carries out the reaction a 1,2-diacyl-sn-glycerol + UDP-alpha-D-glucose = a 1,2-diacyl-3-O-(beta-D-glucopyranosyl)-sn-glycerol + UDP + H(+). It participates in glycolipid metabolism; diglucosyl-diacylglycerol biosynthesis. In terms of biological role, processive glucosyltransferase involved in the biosynthesis of both the bilayer- and non-bilayer-forming membrane glucolipids. Is able to successively transfer up to three glucosyl residues to diacylglycerol (DAG), thereby catalyzing the formation of beta-monoglucosyl-DAG (3-O-(beta-D-glucopyranosyl)-1,2-diacyl-sn-glycerol), beta-diglucosyl-DAG (3-O-(beta-D-glucopyranosyl-beta-(1-&gt;6)-D-glucopyranosyl)-1,2-diacyl-sn-glycerol) and beta-triglucosyl-DAG (3-O-(beta-D-glucopyranosyl-beta-(1-&gt;6)-D-glucopyranosyl-beta-(1-&gt;6)-D-glucopyranosyl)-1,2-diacyl-sn-glycerol). Beta-diglucosyl-DAG is the predominant glycolipid found in Bacillales and is also used as a membrane anchor for lipoteichoic acid (LTA). Also seems to be able to form beta-tetraglucosyl-DAG, although this glycolipid has not been found in B.subtilis membrane. UgtP can only use UDP-glucose as sugar donor. This chain is Processive diacylglycerol beta-glucosyltransferase, found in Bacillus subtilis (strain 168).